Reading from the N-terminus, the 77-residue chain is Probable small nuclear ribonucleoprotein G (77 aa).

In terms of domain architecture, Sm spans 4–76 (THPPELKKYM…VVIMEPKERI (73 aa)).

Belongs to the snRNP Sm proteins family. As to quaternary structure, core component of the spliceosomal U1, U2, U4 and U5 small nuclear ribonucleoproteins (snRNPs), the building blocks of the spliceosome.

The protein resides in the cytoplasm. Its subcellular location is the cytosol. The protein localises to the nucleus. In terms of biological role, plays a role in pre-mRNA splicing as a core component of the spliceosomal U1, U2, U4 and U5 small nuclear ribonucleoproteins (snRNPs), the building blocks of the spliceosome. In Caenorhabditis elegans, this protein is Probable small nuclear ribonucleoprotein G (snr-7).